The sequence spans 474 residues: Ribulose bisphosphate carboxylase large chain (474 aa).

The residue at position 13 (K13) is an N6,N6,N6-trimethyllysine. Substrate-binding residues include N122 and T172. The active-site Proton acceptor is K174. K176 contacts substrate. Residues K200, D202, and E203 each contribute to the Mg(2+) site. K200 bears the N6-carboxylysine mark. H293 serves as the catalytic Proton acceptor. Positions 294, 326, and 378 each coordinate substrate.

Belongs to the RuBisCO large chain family. Type I subfamily. In terms of assembly, heterohexadecamer of 8 large chains and 8 small chains; disulfide-linked. The disulfide link is formed within the large subunit homodimers. It depends on Mg(2+) as a cofactor. In terms of processing, the disulfide bond which can form in the large chain dimeric partners within the hexadecamer appears to be associated with oxidative stress and protein turnover.

The protein localises to the plastid. Its subcellular location is the chloroplast. The catalysed reaction is 2 (2R)-3-phosphoglycerate + 2 H(+) = D-ribulose 1,5-bisphosphate + CO2 + H2O. The enzyme catalyses D-ribulose 1,5-bisphosphate + O2 = 2-phosphoglycolate + (2R)-3-phosphoglycerate + 2 H(+). In terms of biological role, ruBisCO catalyzes two reactions: the carboxylation of D-ribulose 1,5-bisphosphate, the primary event in carbon dioxide fixation, as well as the oxidative fragmentation of the pentose substrate in the photorespiration process. Both reactions occur simultaneously and in competition at the same active site. The sequence is that of Ribulose bisphosphate carboxylase large chain from Dendrophthora clavata (Columbian mistletoe).